The chain runs to 160 residues: Cytochrome b6-f complex subunit 4 (160 aa).

3 consecutive transmembrane segments (helical) span residues 36–56 (LLYI…GLSV), 95–115 (LLGV…PFIE), and 131–151 (TVFL…ALPI).

It belongs to the cytochrome b family. PetD subfamily. As to quaternary structure, the 4 large subunits of the cytochrome b6-f complex are cytochrome b6, subunit IV (17 kDa polypeptide, petD), cytochrome f and the Rieske protein, while the 4 small subunits are petG, petL, petM and petN. The complex functions as a dimer.

The protein localises to the plastid. The protein resides in the chloroplast thylakoid membrane. Its function is as follows. Component of the cytochrome b6-f complex, which mediates electron transfer between photosystem II (PSII) and photosystem I (PSI), cyclic electron flow around PSI, and state transitions. This Chlorella vulgaris (Green alga) protein is Cytochrome b6-f complex subunit 4.